The following is a 61-amino-acid chain: Cobrotoxin-b (61 aa).

4 disulfide bridges follow: cysteine 3-cysteine 23, cysteine 17-cysteine 40, cysteine 42-cysteine 53, and cysteine 54-cysteine 59.

It belongs to the three-finger toxin family. Short-chain subfamily. Type I alpha-neurotoxin sub-subfamily. Expressed by the venom gland.

It is found in the secreted. Its function is as follows. Produces peripheral paralysis by blocking neuromuscular transmission at the postsynaptic site. Binds to the nicotinic acetylcholine receptor. This chain is Cobrotoxin-b, found in Naja kaouthia (Monocled cobra).